Reading from the N-terminus, the 488-residue chain is Inosine-5'-monophosphate dehydrogenase (488 aa).

2 consecutive CBS domains span residues 94–150 and 154–215; these read IVSE…SKTV and MTKK…CKDE. NAD(+) contacts are provided by residues Asp249, 249–251, and 299–301; these read DSS and GIG. The K(+) site is built by Gly301 and Gly303. Ser304 serves as a coordination point for IMP. Residue Cys306 coordinates K(+). Residue Cys306 is the Thioimidate intermediate of the active site. Residues 339–341, 362–363, and 386–390 each bind IMP; these read DGG, GS, and YRGMG. The Proton acceptor role is filled by Arg402. An IMP-binding site is contributed by Glu416. Residues Glu470, Ser471, and His472 each contribute to the K(+) site.

It belongs to the IMPDH/GMPR family. In terms of assembly, homotetramer. Requires K(+) as cofactor.

The catalysed reaction is IMP + NAD(+) + H2O = XMP + NADH + H(+). It functions in the pathway purine metabolism; XMP biosynthesis via de novo pathway; XMP from IMP: step 1/1. Its activity is regulated as follows. Mycophenolic acid (MPA) is a non-competitive inhibitor that prevents formation of the closed enzyme conformation by binding to the same site as the amobile flap. In contrast, mizoribine monophosphate (MZP) is a competitive inhibitor that induces the closed conformation. MPA is a potent inhibitor of mammalian IMPDHs but a poor inhibitor of the bacterial enzymes. MZP is a more potent inhibitor of bacterial IMPDH. In terms of biological role, catalyzes the conversion of inosine 5'-phosphate (IMP) to xanthosine 5'-phosphate (XMP), the first committed and rate-limiting step in the de novo synthesis of guanine nucleotides, and therefore plays an important role in the regulation of cell growth. The chain is Inosine-5'-monophosphate dehydrogenase from Haemophilus influenzae (strain ATCC 51907 / DSM 11121 / KW20 / Rd).